The sequence spans 101 residues: Co-chaperonin GroES (101 aa).

Belongs to the GroES chaperonin family. In terms of assembly, heptamer of 7 subunits arranged in a ring. Interacts with the chaperonin GroEL.

It localises to the cytoplasm. Together with the chaperonin GroEL, plays an essential role in assisting protein folding. The GroEL-GroES system forms a nano-cage that allows encapsulation of the non-native substrate proteins and provides a physical environment optimized to promote and accelerate protein folding. GroES binds to the apical surface of the GroEL ring, thereby capping the opening of the GroEL channel. The chain is Co-chaperonin GroES from Thermus thermophilus (strain ATCC BAA-163 / DSM 7039 / HB27).